We begin with the raw amino-acid sequence, 326 residues long: Chain length determinant protein (326 aa).

Topologically, residues 1–31 are cytoplasmic; it reads MRVENNNVSGQNHDPEQIDLIDLLVQLWRGK. A helical membrane pass occupies residues 32-52; it reads MTIIISVIVAIALAIGYLAVA. At 53 to 295 the chain is on the periplasmic side; that stretch reads KEKWTSTAII…LPIRRDSPKK (243 aa). Residues 296–316 traverse the membrane as a helical segment; that stretch reads AITLILAVLLGGMVGAGIVLG. Residues 317–326 lie on the Cytoplasmic side of the membrane; sequence RNALRNYNAK.

It belongs to the WzzB/Cld/Rol family. As to quaternary structure, homodimer.

It localises to the cell inner membrane. The protein operates within bacterial outer membrane biogenesis; lipopolysaccharide biosynthesis. In terms of biological role, confers a modal distribution of chain length on the O-antigen component of lipopolysaccharide (LPS). Gives rise to a reduced number of short chain molecules and increases in numbers of longer molecules. The chain is Chain length determinant protein (wzzB) from Escherichia coli (strain K12).